Reading from the N-terminus, the 428-residue chain is Patatin-like protein 3 (428 aa).

Positions 38–252 (LSIDGGGIRG…AANNPTLCAI (215 aa)) constitute a PNPLA domain. A GXGXXG motif is present at residues 42-47 (GGGIRG). The GXSXG signature appears at 80 to 84 (GTSTG). Ser-82 serves as the catalytic Nucleophile. Asp-239 serves as the catalytic Proton acceptor. The short motif at 239–241 (DGG) is the DGA/G element. At Ser-423 the chain carries Phosphoserine.

Belongs to the patatin family. In terms of tissue distribution, expressed specifically in the stigma, ovary and funiculus of the ovary.

It is found in the cytoplasm. Its function is as follows. Possesses non-specific lipolytic acyl hydrolase (LAH) activity. Catalyzes the hydrolysis of the neutral lipids monogalactosyldiacylglycerol (MGDG), digalactosyldiacylglycerol (DGDG) and phosphatidylglycerol (PG), and less efficiently the polar lipids phosphatidylcholine (PC) and phosphatidylinositol (PI), but not the storage lipid triacylglycerol (TAG). May play a role in root development. The sequence is that of Patatin-like protein 3 (PLP3) from Arabidopsis thaliana (Mouse-ear cress).